Here is a 260-residue protein sequence, read N- to C-terminus: Ribosomal protein L11 methyltransferase (260 aa).

S-adenosyl-L-methionine is bound by residues Thr-119, Gly-140, Asp-162, and Asn-203.

This sequence belongs to the methyltransferase superfamily. PrmA family.

The protein resides in the cytoplasm. It catalyses the reaction L-lysyl-[protein] + 3 S-adenosyl-L-methionine = N(6),N(6),N(6)-trimethyl-L-lysyl-[protein] + 3 S-adenosyl-L-homocysteine + 3 H(+). Functionally, methylates ribosomal protein L11. This is Ribosomal protein L11 methyltransferase from Thermosipho africanus (strain TCF52B).